A 364-amino-acid chain; its full sequence is Dual-specificity RNA methyltransferase RlmN (364 aa).

Glutamate 91 functions as the Proton acceptor in the catalytic mechanism. A Radical SAM core domain is found at 97 to 333 (ESDRGTLCIS…VTVRKTRGDD (237 aa)). A disulfide bridge connects residues cysteine 104 and cysteine 338. [4Fe-4S] cluster is bound by residues cysteine 111, cysteine 115, and cysteine 118. S-adenosyl-L-methionine-binding positions include 164-165 (GE), serine 196, 218-220 (SLH), and asparagine 295. The active-site S-methylcysteine intermediate is the cysteine 338.

It belongs to the radical SAM superfamily. RlmN family. The cofactor is [4Fe-4S] cluster.

It is found in the cytoplasm. It catalyses the reaction adenosine(2503) in 23S rRNA + 2 reduced [2Fe-2S]-[ferredoxin] + 2 S-adenosyl-L-methionine = 2-methyladenosine(2503) in 23S rRNA + 5'-deoxyadenosine + L-methionine + 2 oxidized [2Fe-2S]-[ferredoxin] + S-adenosyl-L-homocysteine. It carries out the reaction adenosine(37) in tRNA + 2 reduced [2Fe-2S]-[ferredoxin] + 2 S-adenosyl-L-methionine = 2-methyladenosine(37) in tRNA + 5'-deoxyadenosine + L-methionine + 2 oxidized [2Fe-2S]-[ferredoxin] + S-adenosyl-L-homocysteine. Specifically methylates position 2 of adenine 2503 in 23S rRNA and position 2 of adenine 37 in tRNAs. m2A2503 modification seems to play a crucial role in the proofreading step occurring at the peptidyl transferase center and thus would serve to optimize ribosomal fidelity. In Neisseria meningitidis serogroup A / serotype 4A (strain DSM 15465 / Z2491), this protein is Dual-specificity RNA methyltransferase RlmN.